A 336-amino-acid polypeptide reads, in one-letter code: Cell division protein ZipA (336 aa).

The Periplasmic segment spans residues 1–2; that stretch reads ME. The chain crosses the membrane as a helical span at residues 3–23; that stretch reads LHILFFILAGLLIAVLIGFSL. The Cytoplasmic portion of the chain corresponds to 24 to 336; sequence WSARREKSRI…SRQSYLARVS (313 aa). The interval 57–76 is disordered; sequence SLNPQSYAQTTGQHGETEAD. Residues 59 to 70 show a composition bias toward polar residues; the sequence is NPQSYAQTTGQH.

It belongs to the ZipA family. As to quaternary structure, interacts with FtsZ via their C-terminal domains.

The protein localises to the cell inner membrane. In terms of biological role, essential cell division protein that stabilizes the FtsZ protofilaments by cross-linking them and that serves as a cytoplasmic membrane anchor for the Z ring. Also required for the recruitment to the septal ring of downstream cell division proteins. The polypeptide is Cell division protein ZipA (Actinobacillus pleuropneumoniae serotype 7 (strain AP76)).